A 487-amino-acid polypeptide reads, in one-letter code: L-tartrate/succinate antiporter (487 aa).

At 1-9 the chain is on the periplasmic side; sequence MKPSTEWWR. Residues 10–30 traverse the membrane as a helical segment; the sequence is YLAPLAVIAIIALLPVPAGLE. Residues 31 to 32 are Cytoplasmic-facing; the sequence is NH. A run of 2 helical transmembrane segments spans residues 33–53 and 54–74; these read TWLYFAVFTGVIVGLILEPVP and GAVVAMVGISIIAILSPWLLF. Residues 75–92 lie on the Cytoplasmic side of the membrane; sequence SPEQLAQPGFKFTAKSLS. Residues 93–113 form a helical membrane-spanning segment; sequence WAVSGFSNSVIWLIFAAFMFG. The Periplasmic segment spans residues 114–136; the sequence is TGYEKTGLGRRIALILVKKMGHR. Residues 137–157 form a helical membrane-spanning segment; sequence TLFLGYAVMFSELILAPVTPS. Topologically, residues 158 to 188 are cytoplasmic; the sequence is NSARGAGIIYPIIRNLPPLYQSQPNDSSSRS. Residues 189–209 form a helical membrane-spanning segment; that stretch reads IGSYIMWMGIVADCVTSAIFL. The Periplasmic portion of the chain corresponds to 210 to 235; the sequence is TAMAPNLLLIGLMKSASHATLSWGDW. The chain crosses the membrane as a helical span at residues 236–256; the sequence is FLGMLPLSILLVLLVPWLAYV. Residues 257–291 are Cytoplasmic-facing; it reads LYPPVLKSGDQVPRWAETELQAMGPLCSREKRMLG. 2 helical membrane passes run 292–312 and 313–333; these read LMVGALVLWIFGGDYIDAAMV and GYSVVALMLLLRIISWDDIVS. Residues 334–339 are Cytoplasmic-facing; that stretch reads NKAAWN. A helical membrane pass occupies residues 340-360; the sequence is VFFWLASLITLATGLNNTGFI. Over 361–369 the chain is Periplasmic; sequence SWFGKLLAG. Residues 370 to 390 traverse the membrane as a helical segment; sequence SLSGYSPTMVMVALIVVFYLL. Topologically, residues 391–392 are cytoplasmic; it reads RY. The helical transmembrane segment at 393-413 threads the bilayer; it reads FFASATAYTSALAPMMIAAAL. Residues 414 to 417 are Periplasmic-facing; it reads AMPE. The chain crosses the membrane as a helical span at residues 418-438; sequence IPLPVFCLMVGAAIGLGSILT. The Cytoplasmic segment spans residues 439–464; sequence PYATGPSPIYYGSGYLPTADYWRLGA. A helical membrane pass occupies residues 465 to 485; it reads IFGLIFLVLLVITGLLWMPVV. The Periplasmic portion of the chain corresponds to 486-487; that stretch reads LL.

It belongs to the SLC13A/DASS transporter (TC 2.A.47) family. DIT1 subfamily.

It localises to the cell inner membrane. The catalysed reaction is (2R,3R)-tartrate(out) + succinate(in) = (2R,3R)-tartrate(in) + succinate(out). Catalyzes the uptake of tartrate in exchange for intracellular succinate. Essential for anaerobic L-tartrate fermentation. This Escherichia coli (strain K12) protein is L-tartrate/succinate antiporter.